Reading from the N-terminus, the 345-residue chain is Anthranilate phosphoribosyltransferase (345 aa).

5-phospho-alpha-D-ribose 1-diphosphate-binding positions include G88, 91 to 92 (GD), T96, 98 to 101 (NIST), 116 to 124 (KHGNRSASG), and S128. Position 88 (G88) interacts with anthranilate. S100 provides a ligand contact to Mg(2+). Anthranilate is bound at residue N119. R174 contributes to the anthranilate binding site. Mg(2+) is bound by residues D233 and E234.

Belongs to the anthranilate phosphoribosyltransferase family. In terms of assembly, homodimer. The cofactor is Mg(2+).

It carries out the reaction N-(5-phospho-beta-D-ribosyl)anthranilate + diphosphate = 5-phospho-alpha-D-ribose 1-diphosphate + anthranilate. Its pathway is amino-acid biosynthesis; L-tryptophan biosynthesis; L-tryptophan from chorismate: step 2/5. In terms of biological role, catalyzes the transfer of the phosphoribosyl group of 5-phosphorylribose-1-pyrophosphate (PRPP) to anthranilate to yield N-(5'-phosphoribosyl)-anthranilate (PRA). The chain is Anthranilate phosphoribosyltransferase from Prochlorococcus marinus (strain NATL1A).